Consider the following 401-residue polypeptide: tRNA pseudouridine synthase Pus10 (401 aa).

One can recognise a THUMP domain in the interval 64 to 195 (ALAKSGHRES…DGSVSVEVMP (132 aa)).

The protein belongs to the pseudouridine synthase Pus10 family.

The enzyme catalyses uridine(54) in tRNA = pseudouridine(54) in tRNA. It carries out the reaction uridine(55) in tRNA = pseudouridine(55) in tRNA. Responsible for synthesis of pseudouridine from uracil-54 and uracil-55 in the psi GC loop of transfer RNAs. The sequence is that of tRNA pseudouridine synthase Pus10 from Caldivirga maquilingensis (strain ATCC 700844 / DSM 13496 / JCM 10307 / IC-167).